The chain runs to 247 residues: MSKQPDRLFAQPLEQVPDFVFNEDVVRVFPDMIKRSVPGYPTIVENLGVLAARFAQPNTALYDLGASLGAVTQSLRRHVRSDGCRVIAVDNSAAMVERCRQYLTAQDSMFQELLPVQVLEADILALPFEPASVVAMNFTLQFIAPDQRLELLGRIRQALLPGGALILSEKLRFADEQEQDLLNELHLDFKRANGYSELEIAQKRSAIENVMRPDTLEAHQERLRAAGFSKVVPWFQCLNFASLIALP.

S-adenosyl-L-methionine-binding positions include Y40, 65–67 (GAS), 90–91 (DN), 122–123 (DI), N137, and R204.

The protein belongs to the class I-like SAM-binding methyltransferase superfamily. Cx-SAM synthase family. Homodimer.

The catalysed reaction is prephenate + S-adenosyl-L-methionine = carboxy-S-adenosyl-L-methionine + 3-phenylpyruvate + H2O. Functionally, catalyzes the conversion of S-adenosyl-L-methionine (SAM) to carboxy-S-adenosyl-L-methionine (Cx-SAM). This is Carboxy-S-adenosyl-L-methionine synthase from Pseudomonas putida (strain GB-1).